A 100-amino-acid polypeptide reads, in one-letter code: Small ribosomal subunit protein uS14c (100 aa).

The protein belongs to the universal ribosomal protein uS14 family. In terms of assembly, part of the 30S ribosomal subunit.

Its subcellular location is the plastid. It is found in the chloroplast. Its function is as follows. Binds 16S rRNA, required for the assembly of 30S particles. The polypeptide is Small ribosomal subunit protein uS14c (Amborella trichopoda).